A 206-amino-acid chain; its full sequence is Nucleoside triphosphate pyrophosphatase (206 aa).

The active-site Proton acceptor is Asp76.

Belongs to the Maf family. The cofactor is a divalent metal cation.

The protein localises to the cytoplasm. It carries out the reaction a ribonucleoside 5'-triphosphate + H2O = a ribonucleoside 5'-phosphate + diphosphate + H(+). The catalysed reaction is a 2'-deoxyribonucleoside 5'-triphosphate + H2O = a 2'-deoxyribonucleoside 5'-phosphate + diphosphate + H(+). Nucleoside triphosphate pyrophosphatase. May have a dual role in cell division arrest and in preventing the incorporation of modified nucleotides into cellular nucleic acids. This Streptomyces coelicolor (strain ATCC BAA-471 / A3(2) / M145) protein is Nucleoside triphosphate pyrophosphatase.